The following is a 545-amino-acid chain: Membrane protein insertase YidC (545 aa).

The next 6 helical transmembrane spans lie at 10-30 (AVYL…FLFS), 319-339 (LLYF…NVIP), 341-361 (WGLS…PLTF), 407-427 (IGGC…YGLV), 467-487 (ILPF…SNVS), and 502-522 (MPIM…IYWI).

It belongs to the OXA1/ALB3/YidC family. Type 1 subfamily. As to quaternary structure, interacts with the Sec translocase complex via SecD. Specifically interacts with transmembrane segments of nascent integral membrane proteins during membrane integration.

It localises to the cell inner membrane. Its function is as follows. Required for the insertion and/or proper folding and/or complex formation of integral membrane proteins into the membrane. Involved in integration of membrane proteins that insert both dependently and independently of the Sec translocase complex, as well as at least some lipoproteins. Aids folding of multispanning membrane proteins. The chain is Membrane protein insertase YidC from Borrelia duttonii (strain Ly).